Consider the following 158-residue polypeptide: uncharacterized protein (158 aa).

The N-terminal stretch at 1–30 (MNKKFLKCGTLFLISCSILGSTIPAVTVFS) is a signal peptide.

This is an uncharacterized protein from Streptococcus pneumoniae serotype 2 (strain D39 / NCTC 7466).